Consider the following 1040-residue polypeptide: V(D)J recombination-activating protein 1 (1040 aa).

Positions 39-53 (EKAPEEAQKEKDSSE) are enriched in basic and acidic residues. Residues 39 to 71 (EKAPEEAQKEKDSSEGKPYLEQSPVVPEKPGGQ) are disordered. Residue K233 forms a Glycyl lysine isopeptide (Lys-Gly) (interchain with G-Cter in ubiquitin) linkage. The Zn(2+) site is built by C266, H270, C290, C293, H295, C305, H307, C310, C313, C325, C328, C355, C360, H372, and H376. The RING-type zinc-finger motif lies at 290–329 (CQICEHILADPVETSCKHLFCRICILRCLKVMGSYCPSCR). The RAG1-type zinc-finger motif lies at 351–380 (LMVKCPAQDCNEEVSLEKYNHHVSSHKESK). Positions 389 to 456 (GGRPRQHLLS…QADELEAIMQ (68 aa)) form a DNA-binding region, NBD. A divalent metal cation-binding residues include D600, D708, and E962.

This sequence belongs to the RAG1 family. As to quaternary structure, homodimer. Component of the RAG complex composed of core components RAG1 and RAG2, and associated component HMGB1 or HMGB2. Interacts with DCAF1, leading to recruitment of the CUL4A-RBX1-DDB1-DCAF1/VPRBP complex to ubiquitinate proteins and limit error-prone repair during V(D)J recombination. The cofactor is Mg(2+). Mn(2+) serves as cofactor. In terms of processing, autoubiquitinated in the presence of CDC34/UBCH3. As to expression, maturing lymphoid cells and central nervous system.

It localises to the nucleus. It carries out the reaction S-ubiquitinyl-[E2 ubiquitin-conjugating enzyme]-L-cysteine + [acceptor protein]-L-lysine = [E2 ubiquitin-conjugating enzyme]-L-cysteine + N(6)-ubiquitinyl-[acceptor protein]-L-lysine.. In terms of biological role, catalytic component of the RAG complex, a multiprotein complex that mediates the DNA cleavage phase during V(D)J recombination. V(D)J recombination assembles a diverse repertoire of immunoglobulin and T-cell receptor genes in developing B and T-lymphocytes through rearrangement of different V (variable), in some cases D (diversity), and J (joining) gene segments. In the RAG complex, RAG1 mediates the DNA-binding to the conserved recombination signal sequences (RSS) and catalyzes the DNA cleavage activities by introducing a double-strand break between the RSS and the adjacent coding segment. RAG2 is not a catalytic component but is required for all known catalytic activities. DNA cleavage occurs in 2 steps: a first nick is introduced in the top strand immediately upstream of the heptamer, generating a 3'-hydroxyl group that can attack the phosphodiester bond on the opposite strand in a direct transesterification reaction, thereby creating 4 DNA ends: 2 hairpin coding ends and 2 blunt, 5'-phosphorylated ends. The chromatin structure plays an essential role in the V(D)J recombination reactions and the presence of histone H3 trimethylated at 'Lys-4' (H3K4me3) stimulates both the nicking and haipinning steps. The RAG complex also plays a role in pre-B cell allelic exclusion, a process leading to expression of a single immunoglobulin heavy chain allele to enforce clonality and monospecific recognition by the B-cell antigen receptor (BCR) expressed on individual B-lymphocytes. The introduction of DNA breaks by the RAG complex on one immunoglobulin allele induces ATM-dependent repositioning of the other allele to pericentromeric heterochromatin, preventing accessibility to the RAG complex and recombination of the second allele. In addition to its endonuclease activity, RAG1 also acts as an E3 ubiquitin-protein ligase that mediates monoubiquitination of histone H3. Histone H3 monoubiquitination is required for the joining step of V(D)J recombination. Mediates polyubiquitination of KPNA1. This Mus musculus (Mouse) protein is V(D)J recombination-activating protein 1 (Rag1).